A 45-amino-acid chain; its full sequence is Alpha-conotoxin-like Lp1.10 (45 aa).

Residues 1-27 (VVLGPASDGRNAAANVKAPDLIALTVR) constitute a propeptide that is removed on maturation. Cystine bridges form between Cys-30–Cys-36 and Cys-31–Cys-44. Residues 32 to 34 (HNA) form a lacks the Ser-Xaa-Pro motif that is crucial for potent interaction with nAChR region. Residue Cys-44 is modified to Cysteine amide.

This sequence belongs to the conotoxin A superfamily. As to expression, expressed by the venom duct.

It localises to the secreted. Functionally, alpha-conotoxins act on postsynaptic membranes, they bind to the nicotinic acetylcholine receptors (nAChR) and thus inhibit them. Has possibly a distinct nAChR binding mode from other alpha-conotoxins, due to a different three residue motif (lacks the Ser-Xaa-Pro motif). The protein is Alpha-conotoxin-like Lp1.10 of Conus leopardus (Leopard cone).